The chain runs to 176 residues: MTTASSADHPTRRDFLFVATGAAAAVGGAAALWPFISQMNPDASTIAAGAPIEVDLSPIAEGQDIKVFWRGKPIYISHRTKKQIDEARAVNVASLPDPQSDEARVKSGHEQWLVVIGICTHLGCIPIAHEGNYDGFFCPCHGSQYDSSGRIRQGPAPANLPVPPYQFVSDTKIQIG.

Residues 15 to 36 (FLFVATGAAAAVGGAAALWPFI) traverse the membrane as a helical segment. Positions 87–174 (ARAVNVASLP…YQFVSDTKIQ (88 aa)) constitute a Rieske domain. Residues cysteine 119, histidine 121, cysteine 138, and histidine 141 each contribute to the [2Fe-2S] cluster site. A disulfide bridge links cysteine 124 with cysteine 140.

Belongs to the Rieske iron-sulfur protein family. As to quaternary structure, the main subunits of complex b-c1 are: cytochrome b, cytochrome c1 and the Rieske protein. Requires [2Fe-2S] cluster as cofactor.

The protein resides in the cell membrane. It catalyses the reaction a quinol + 2 Fe(III)-[cytochrome c](out) = a quinone + 2 Fe(II)-[cytochrome c](out) + 2 H(+)(out). Functionally, component of the ubiquinol-cytochrome c reductase complex (complex III or cytochrome b-c1 complex), which is a respiratory chain that generates an electrochemical potential coupled to ATP synthesis. This chain is Ubiquinol-cytochrome c reductase iron-sulfur subunit (petA), found in Bradyrhizobium diazoefficiens (strain JCM 10833 / BCRC 13528 / IAM 13628 / NBRC 14792 / USDA 110).